The sequence spans 232 residues: Ubiquinone biosynthesis O-methyltransferase (232 aa).

S-adenosyl-L-methionine contacts are provided by R36, G55, D76, and M120.

Belongs to the methyltransferase superfamily. UbiG/COQ3 family.

It carries out the reaction a 3-demethylubiquinol + S-adenosyl-L-methionine = a ubiquinol + S-adenosyl-L-homocysteine + H(+). The catalysed reaction is a 3-(all-trans-polyprenyl)benzene-1,2-diol + S-adenosyl-L-methionine = a 2-methoxy-6-(all-trans-polyprenyl)phenol + S-adenosyl-L-homocysteine + H(+). Its pathway is cofactor biosynthesis; ubiquinone biosynthesis. O-methyltransferase that catalyzes the 2 O-methylation steps in the ubiquinone biosynthetic pathway. In Burkholderia thailandensis (strain ATCC 700388 / DSM 13276 / CCUG 48851 / CIP 106301 / E264), this protein is Ubiquinone biosynthesis O-methyltransferase.